The following is a 209-amino-acid chain: MSTKSRTRSKTRLSRALGIPLTPKAAKYLEKRPYAPGEHGRSKRKQDSDYAVRLREKQRLRAQYGIREAQLKIAFQEARRTQGLTGENLVEILEQRLDALVVRSGLARTTAQARQLVVHRHIMVDGKIVDRPSFRVKAGQMIHVKPRSEGTEPFQVAAAGGHADVLPKLPPYLEVELDKLQARLVRLPKRAEVPVTCEVQLVVEYYAAR.

The span at 1 to 13 (MSTKSRTRSKTRL) shows a compositional bias: basic residues. Disordered stretches follow at residues 1-20 (MSTKSRTRSKTRLSRALGIP) and 28-49 (YLEKRPYAPGEHGRSKRKQDSD). In terms of domain architecture, S4 RNA-binding spans 95 to 160 (QRLDALVVRS…TEPFQVAAAG (66 aa)).

It belongs to the universal ribosomal protein uS4 family. As to quaternary structure, part of the 30S ribosomal subunit. Contacts protein S5. The interaction surface between S4 and S5 is involved in control of translational fidelity.

Its function is as follows. One of the primary rRNA binding proteins, it binds directly to 16S rRNA where it nucleates assembly of the body of the 30S subunit. Functionally, with S5 and S12 plays an important role in translational accuracy. This Clavibacter sepedonicus (Clavibacter michiganensis subsp. sepedonicus) protein is Small ribosomal subunit protein uS4.